The primary structure comprises 246 residues: Acetoacetate decarboxylase (246 aa).

The active-site Schiff-base intermediate with acetoacetate is Lys115.

This sequence belongs to the ADC family.

It carries out the reaction acetoacetate + H(+) = acetone + CO2. Its function is as follows. Catalyzes the conversion of acetoacetate to acetone and carbon dioxide. In Clostridium beijerinckii (strain ATCC 51743 / NCIMB 8052) (Clostridium acetobutylicum), this protein is Acetoacetate decarboxylase.